The sequence spans 615 residues: MSPLATKALRPAATDPASIRNFCIIAHIDHGKSTLADRMLQMTGVVDSRSMRAQYLDRMDIERERGITIKSQAVRMPWELDGQTYALNMIDTPGHVDFSYEVSRSLAACEGAILLVDAAQGIEAQTLANLYLALENDLTIIPVLNKIDLPAADPDKYAAELASLIGGDPSDVLRVSGKTGAGVEDLLDRVSRTIPAPVGDPDAAARAMIFDSVYDAYRGVVTYVRMIDGKLSPREKISMMSTRATHEILEIGVSSPEPTPSDGLGVGEVGYLITGVKDVRQSKVGDTVTTAARPATEALPGYTEPLPMVFSGLYPIDGSDYPDLRDALDKLKLSDAALVYEPETSVALGFGFRCGFLGLLHLEIITERLSREFGLDLITTAPSVIYEVTSEDKKTVTVTNPSEFPGGKIVSVSEPVVKAAILAPKDYVGTIMELCQSRRGILLGMEYLGEDRVEIRYTMPLGEIVFDFFDNLKSKTAGYASLDYEPAGSQDSDLVKVDILLQGEQVDAFSAIVHRDKAYAYGVLMTGRLRELIPRQQFEVPIQAAIGARIIARESIRAMRKDVLAKCYGGDITRKRKLLEKQKEGKKRMKMVGRVEVPQEAFIAALSGDTEKKAK.

The region spanning 17–198 (ASIRNFCIIA…RVSRTIPAPV (182 aa)) is the tr-type G domain. GTP-binding positions include 29–34 (DHGKST) and 145–148 (NKID).

This sequence belongs to the TRAFAC class translation factor GTPase superfamily. Classic translation factor GTPase family. LepA subfamily.

It is found in the cell membrane. It catalyses the reaction GTP + H2O = GDP + phosphate + H(+). Its function is as follows. Required for accurate and efficient protein synthesis under certain stress conditions. May act as a fidelity factor of the translation reaction, by catalyzing a one-codon backward translocation of tRNAs on improperly translocated ribosomes. Back-translocation proceeds from a post-translocation (POST) complex to a pre-translocation (PRE) complex, thus giving elongation factor G a second chance to translocate the tRNAs correctly. Binds to ribosomes in a GTP-dependent manner. The sequence is that of Elongation factor 4 from Clavibacter sepedonicus (Clavibacter michiganensis subsp. sepedonicus).